The sequence spans 649 residues: Threonine--tRNA ligase (649 aa).

The 66-residue stretch at 1 to 66 (MVQITLPDGS…DNDAQLAIVT (66 aa)) folds into the TGS domain. Residues 247 to 538 (DHRKIGRELD…LIENHAGAMP (292 aa)) are catalytic. Residues cysteine 338, histidine 389, and histidine 515 each contribute to the Zn(2+) site.

It belongs to the class-II aminoacyl-tRNA synthetase family. Homodimer. Zn(2+) is required as a cofactor.

It localises to the cytoplasm. The enzyme catalyses tRNA(Thr) + L-threonine + ATP = L-threonyl-tRNA(Thr) + AMP + diphosphate + H(+). In terms of biological role, catalyzes the attachment of threonine to tRNA(Thr) in a two-step reaction: L-threonine is first activated by ATP to form Thr-AMP and then transferred to the acceptor end of tRNA(Thr). Also edits incorrectly charged L-seryl-tRNA(Thr). This Bordetella bronchiseptica (strain ATCC BAA-588 / NCTC 13252 / RB50) (Alcaligenes bronchisepticus) protein is Threonine--tRNA ligase.